Here is a 280-residue protein sequence, read N- to C-terminus: Feruloyl esterase 1 (280 aa).

An N-terminal signal peptide occupies residues M1–A20. Intrachain disulfides connect C49–C278, C111–C114, and C247–C254. An N-linked (GlcNAc...) asparagine glycan is attached at N99. S153 (nucleophile) is an active-site residue. Residue D214 is the Charge relay system of the active site. The active-site Charge relay system is H267.

The protein belongs to the AB hydrolase superfamily. FaeA family. In terms of processing, glycosylated.

The protein resides in the secreted. The catalysed reaction is feruloyl-polysaccharide + H2O = ferulate + polysaccharide.. With respect to regulation, metal or basic ions Mn(2+), Ni(+), Mg(2+), and NH(4)(+) decrease the activity by 4.4% to 14.1%. The enzymatic activity is inhibited by Zn(2+) at a low concentration (1 mM) but not a high concentration (5 mM). Loses about a quarter of activity by the addition of 1 mM of Cu(2+) or Fe(3+) and activity is completely suppressed when the concentration was up to 5 mM. Low concentrations (0.25 and 0.5 M) of NaCl improve the activity by 5.6 % or 8.3%, respectively. In terms of biological role, involved in degradation of plant cell walls. Hydrolyzes the feruloyl-arabinose ester bond in arabinoxylans, and the feruloyl-galactose ester bond in pectin. The polypeptide is Feruloyl esterase 1 (Penicillium parvum (Eupenicillium parvum)).